The primary structure comprises 430 residues: Adenylosuccinate synthetase (430 aa).

Residues Gly-12–Lys-18 and Gly-40–Thr-42 each bind GTP. Asp-13 acts as the Proton acceptor in catalysis. Mg(2+) contacts are provided by Asp-13 and Gly-40. Residues Asp-13–Lys-16, Asn-38–His-41, Thr-129, Arg-143, Gln-224, Thr-239, and Arg-303 contribute to the IMP site. The active-site Proton donor is the His-41. Thr-299–Arg-305 is a binding site for substrate. GTP is bound by residues Arg-305, Lys-331–Asp-333, and Ser-413–Gly-415.

Belongs to the adenylosuccinate synthetase family. As to quaternary structure, homodimer. Requires Mg(2+) as cofactor.

Its subcellular location is the cytoplasm. It carries out the reaction IMP + L-aspartate + GTP = N(6)-(1,2-dicarboxyethyl)-AMP + GDP + phosphate + 2 H(+). It participates in purine metabolism; AMP biosynthesis via de novo pathway; AMP from IMP: step 1/2. In terms of biological role, plays an important role in the de novo pathway of purine nucleotide biosynthesis. Catalyzes the first committed step in the biosynthesis of AMP from IMP. The polypeptide is Adenylosuccinate synthetase (Ehrlichia ruminantium (strain Welgevonden)).